The chain runs to 172 residues: Adenine phosphoribosyltransferase (172 aa).

The protein belongs to the purine/pyrimidine phosphoribosyltransferase family. In terms of assembly, homodimer.

It is found in the cytoplasm. The catalysed reaction is AMP + diphosphate = 5-phospho-alpha-D-ribose 1-diphosphate + adenine. It functions in the pathway purine metabolism; AMP biosynthesis via salvage pathway; AMP from adenine: step 1/1. Catalyzes a salvage reaction resulting in the formation of AMP, that is energically less costly than de novo synthesis. The sequence is that of Adenine phosphoribosyltransferase from Crocosphaera subtropica (strain ATCC 51142 / BH68) (Cyanothece sp. (strain ATCC 51142)).